Reading from the N-terminus, the 538-residue chain is Putative cysteine ligase BshC (538 aa).

Positions L462–L533 form a coiled coil.

It belongs to the BshC family.

The chain is Putative cysteine ligase BshC from Christiangramia forsetii (strain DSM 17595 / CGMCC 1.15422 / KT0803) (Gramella forsetii).